A 315-amino-acid polypeptide reads, in one-letter code: Neuroguidin (315 aa).

Ala-2 carries the post-translational modification N-acetylalanine. Residues 13 to 41 (SAVTLLKNLQEQVMAVTAQVKSLTQKVQA) are a coiled coil. The interval 41–174 (AGAYPTEKGL…KGVSKKYVPP (134 aa)) is necessary for interaction with EIF4E. Phosphoserine is present on residues Ser-121, Ser-142, and Ser-143. The interval 124–169 (ENDPLRFKPHPSNMMSKLSSEDEEEDEAEDDQSEASGKKSVKGVSK) is disordered. Residues 144–156 (EDEEEDEAEDDQS) show a composition bias toward acidic residues. Positions 181 to 205 (YDETEAEREKKRLERAKRRALSSSV) form a coiled coil. Ser-204 and Ser-214 each carry phosphoserine. Positions 277 to 315 (DISALTGGTVHLDEDQNPIKKRKKIPQKGRKKKGFRRRR) are disordered. The span at 295–315 (IKKRKKIPQKGRKKKGFRRRR) shows a compositional bias: basic residues.

Belongs to the SAS10 family. As to quaternary structure, part of the small subunit (SSU) processome, composed of more than 70 proteins and the RNA chaperone small nucleolar RNA (snoRNA) U3. Interacts with CPEB1 and EIF4E.

It is found in the nucleus. Its subcellular location is the nucleolus. It localises to the chromosome. The protein localises to the centromere. The protein resides in the cytoplasm. It is found in the cell projection. Its subcellular location is the axon. It localises to the dendrite. The protein localises to the filopodium. Its function is as follows. Part of the small subunit (SSU) processome, first precursor of the small eukaryotic ribosomal subunit. During the assembly of the SSU processome in the nucleolus, many ribosome biogenesis factors, an RNA chaperone and ribosomal proteins associate with the nascent pre-rRNA and work in concert to generate RNA folding, modifications, rearrangements and cleavage as well as targeted degradation of pre-ribosomal RNA by the RNA exosome. Its dissociation from the complex determines the transition from state pre-A1 to state pre-A1*. Inhibits mRNA translation in a cytoplasmic polyadenylation element (CPE)-dependent manner. The polypeptide is Neuroguidin (Homo sapiens (Human)).